A 204-amino-acid chain; its full sequence is Holliday junction branch migration complex subunit RuvA (204 aa).

The interval 1–64 (MIGRLCGTAE…EDAITLFGFI (64 aa)) is domain I. Residues 65-143 (DAAERDWFRL…AMPTGSAFIP (79 aa)) form a domain II region. The segment at 144–154 (TGTAPPVAPPQ) is flexible linker. The interval 154-204 (QGKLADALSALVNLGYRRAEAEAALSAVQAEAGEDAALDELIRGGLRRLAR) is domain III.

The protein belongs to the RuvA family. As to quaternary structure, homotetramer. Forms an RuvA(8)-RuvB(12)-Holliday junction (HJ) complex. HJ DNA is sandwiched between 2 RuvA tetramers; dsDNA enters through RuvA and exits via RuvB. An RuvB hexamer assembles on each DNA strand where it exits the tetramer. Each RuvB hexamer is contacted by two RuvA subunits (via domain III) on 2 adjacent RuvB subunits; this complex drives branch migration. In the full resolvosome a probable DNA-RuvA(4)-RuvB(12)-RuvC(2) complex forms which resolves the HJ.

The protein localises to the cytoplasm. Functionally, the RuvA-RuvB-RuvC complex processes Holliday junction (HJ) DNA during genetic recombination and DNA repair, while the RuvA-RuvB complex plays an important role in the rescue of blocked DNA replication forks via replication fork reversal (RFR). RuvA specifically binds to HJ cruciform DNA, conferring on it an open structure. The RuvB hexamer acts as an ATP-dependent pump, pulling dsDNA into and through the RuvAB complex. HJ branch migration allows RuvC to scan DNA until it finds its consensus sequence, where it cleaves and resolves the cruciform DNA. This Acidiphilium cryptum (strain JF-5) protein is Holliday junction branch migration complex subunit RuvA.